Consider the following 147-residue polypeptide: Ubiquitin-conjugating enzyme E2 D2 (147 aa).

One can recognise a UBC core domain in the interval 1–147 (MALKRIHKEL…AREWTQKYAM (147 aa)). C85 serves as the catalytic Glycyl thioester intermediate.

Belongs to the ubiquitin-conjugating enzyme family. Interacts with SCF (SKP1-CUL1-F-box protein) E3 ubiquitin ligase complex. Interacts with CNOT4 (via RING domain). Interacts with E3 ubiquitin-protein ligases CBLC, PJA1 and PJA2. Interacts with PDZRN3. Interacts with PPP1R11. Interacts with E3 ubiquitin-protein ligase PHF7; the interaction inhibits cleavage of PHF7 and promotes association of the complex with the nucleosome core particle.

The catalysed reaction is S-ubiquitinyl-[E1 ubiquitin-activating enzyme]-L-cysteine + [E2 ubiquitin-conjugating enzyme]-L-cysteine = [E1 ubiquitin-activating enzyme]-L-cysteine + S-ubiquitinyl-[E2 ubiquitin-conjugating enzyme]-L-cysteine.. It carries out the reaction S-ubiquitinyl-[E1 ubiquitin-activating enzyme]-L-cysteine + [acceptor protein]-L-lysine = [E1 ubiquitin-activating enzyme]-L-cysteine + N(6)-monoubiquitinyl-[acceptor protein]-L-lysine.. It functions in the pathway protein modification; protein ubiquitination. Its function is as follows. Accepts ubiquitin from the E1 complex and catalyzes its covalent attachment to other proteins. In vitro catalyzes 'Lys-48'-linked polyubiquitination. Mediates the selective degradation of short-lived and abnormal proteins. Functions in the E6/E6-AP-induced ubiquitination of p53/TP53. Mediates ubiquitination of PEX5 and SQSTM1 and autoubiquitination of STUB1 and TRAF6. Involved in the signal-induced conjugation and subsequent degradation of NFKBIA, FBXW2-mediated GCM1 ubiquitination and degradation, MDM2-dependent degradation of p53/TP53 and the activation of MAVS in the mitochondria by RIGI in response to viral infection. Essential for viral activation of IRF3. This chain is Ubiquitin-conjugating enzyme E2 D2 (UBE2D2), found in Bos taurus (Bovine).